Reading from the N-terminus, the 186-residue chain is UPF0397 protein SGO_0469 (186 aa).

A run of 5 helical transmembrane segments spans residues 14–34, 50–70, 77–97, 119–139, and 152–172; these read VVAT…SIPT, LFGV…GHAL, GNPW…VGLL, AQFV…DILI, and VVAT…LLIA.

Belongs to the UPF0397 family.

It is found in the cell membrane. In Streptococcus gordonii (strain Challis / ATCC 35105 / BCRC 15272 / CH1 / DL1 / V288), this protein is UPF0397 protein SGO_0469.